The sequence spans 184 residues: Peptidyl-tRNA hydrolase (184 aa).

A tRNA-binding site is contributed by Tyr-14. The active-site Proton acceptor is the His-19. 3 residues coordinate tRNA: Phe-64, Asn-66, and Asn-112.

Belongs to the PTH family. Monomer.

The protein resides in the cytoplasm. It catalyses the reaction an N-acyl-L-alpha-aminoacyl-tRNA + H2O = an N-acyl-L-amino acid + a tRNA + H(+). In terms of biological role, hydrolyzes ribosome-free peptidyl-tRNAs (with 1 or more amino acids incorporated), which drop off the ribosome during protein synthesis, or as a result of ribosome stalling. Its function is as follows. Catalyzes the release of premature peptidyl moieties from peptidyl-tRNA molecules trapped in stalled 50S ribosomal subunits, and thus maintains levels of free tRNAs and 50S ribosomes. The protein is Peptidyl-tRNA hydrolase of Listeria innocua serovar 6a (strain ATCC BAA-680 / CLIP 11262).